A 102-amino-acid polypeptide reads, in one-letter code: U7-agatoxin-Ao1a (102 aa).

A signal peptide spans Met1–Ser19. The propeptide occupies Lys20–Arg39. A Tryptophan amide modification is found at Trp101.

It belongs to the venom protein 11 family. 02 (wap-2) subfamily. Post-translationally, contains 5 disulfide bonds. As to expression, expressed by the venom gland.

The protein resides in the secreted. In Agelena orientalis (Funnel-web spider), this protein is U7-agatoxin-Ao1a.